Consider the following 872-residue polypeptide: C-mannosyltransferase dpy-19 homolog (872 aa).

Transmembrane regions (helical) follow at residues Pro-4–Val-24, Phe-126–Ser-146, Ile-149–Ile-169, Phe-179–Ile-199, Ile-211–Ile-231, Val-257–Gly-277, Ser-279–Val-299, Phe-326–Asn-346, and Val-399–Phe-419. Residues Lys-508 to Asp-535 adopt a coiled-coil conformation. The disordered stretch occupies residues Ile-514–Val-620. The span at Glu-524–Ala-533 shows a compositional bias: basic and acidic residues. The segment covering Thr-541–Glu-551 has biased composition (acidic residues). 2 helical membrane-spanning segments follow: residues Ile-627–Leu-647 and Asn-678–Val-698.

The protein belongs to the dpy-19 family.

It localises to the membrane. Probable C-mannosyltransferase that mediates C-mannosylation of tryptophan residues on target proteins. This is C-mannosyltransferase dpy-19 homolog from Drosophila melanogaster (Fruit fly).